We begin with the raw amino-acid sequence, 327 residues long: Serpentine receptor class gamma-2 (327 aa).

A run of 6 helical transmembrane segments spans residues 35-55, 70-90, 157-177, 181-203, 244-264, and 277-297; these read LVQF…LYIL, ILFI…IFFA, MKYA…NIII, LPVY…ATMT, IASF…SLFA, and FLLP…MVMA.

It belongs to the nematode receptor-like protein srg family.

The protein resides in the membrane. The polypeptide is Serpentine receptor class gamma-2 (srg-2) (Caenorhabditis elegans).